The following is a 245-amino-acid chain: 1-(5-phosphoribosyl)-5-[(5-phosphoribosylamino)methylideneamino] imidazole-4-carboxamide isomerase (245 aa).

Asp-8 acts as the Proton acceptor in catalysis. The Proton donor role is filled by Asp-129.

Belongs to the HisA/HisF family.

It localises to the cytoplasm. The enzyme catalyses 1-(5-phospho-beta-D-ribosyl)-5-[(5-phospho-beta-D-ribosylamino)methylideneamino]imidazole-4-carboxamide = 5-[(5-phospho-1-deoxy-D-ribulos-1-ylimino)methylamino]-1-(5-phospho-beta-D-ribosyl)imidazole-4-carboxamide. It participates in amino-acid biosynthesis; L-histidine biosynthesis; L-histidine from 5-phospho-alpha-D-ribose 1-diphosphate: step 4/9. The polypeptide is 1-(5-phosphoribosyl)-5-[(5-phosphoribosylamino)methylideneamino] imidazole-4-carboxamide isomerase (Rhodopseudomonas palustris (strain HaA2)).